Consider the following 207-residue polypeptide: Small ribosomal subunit protein uS2 (207 aa).

The protein belongs to the universal ribosomal protein uS2 family.

The polypeptide is Small ribosomal subunit protein uS2 (Pyrobaculum islandicum (strain DSM 4184 / JCM 9189 / GEO3)).